We begin with the raw amino-acid sequence, 367 residues long: Queuine tRNA-ribosyltransferase (367 aa).

The active-site Proton acceptor is Asp-91. Substrate-binding positions include 91–95 (DSGGF), Asp-145, Gln-188, and Gly-215. Asp-265 functions as the Nucleophile in the catalytic mechanism. Positions 270–274 (TRVAR) are RNA binding; important for wobble base 34 recognition. Residues Cys-303, Cys-305, Cys-308, and His-334 each coordinate Zn(2+).

Belongs to the queuine tRNA-ribosyltransferase family. Homodimer. Within each dimer, one monomer is responsible for RNA recognition and catalysis, while the other monomer binds to the replacement base PreQ1. Zn(2+) serves as cofactor.

It catalyses the reaction 7-aminomethyl-7-carbaguanine + guanosine(34) in tRNA = 7-aminomethyl-7-carbaguanosine(34) in tRNA + guanine. It participates in tRNA modification; tRNA-queuosine biosynthesis. Functionally, catalyzes the base-exchange of a guanine (G) residue with the queuine precursor 7-aminomethyl-7-deazaguanine (PreQ1) at position 34 (anticodon wobble position) in tRNAs with GU(N) anticodons (tRNA-Asp, -Asn, -His and -Tyr). Catalysis occurs through a double-displacement mechanism. The nucleophile active site attacks the C1' of nucleotide 34 to detach the guanine base from the RNA, forming a covalent enzyme-RNA intermediate. The proton acceptor active site deprotonates the incoming PreQ1, allowing a nucleophilic attack on the C1' of the ribose to form the product. After dissociation, two additional enzymatic reactions on the tRNA convert PreQ1 to queuine (Q), resulting in the hypermodified nucleoside queuosine (7-(((4,5-cis-dihydroxy-2-cyclopenten-1-yl)amino)methyl)-7-deazaguanosine). In Thermosipho africanus (strain TCF52B), this protein is Queuine tRNA-ribosyltransferase.